The sequence spans 425 residues: Serine/threonine-protein kinase VRK1 (425 aa).

Residues 38–329 (WKLGSAVGQG…KLRGILQQGL (292 aa)) enclose the Protein kinase domain. Residues 44–52 (VGQGGFGLL) and Lys-72 contribute to the ATP site. Asp-178 (proton acceptor) is an active-site residue. The tract at residues 343 to 425 (GVATNSTSLP…KSRGRPKKNS (83 aa)) is disordered. Over residues 415-425 (KKSRGRPKKNS) the composition is skewed to basic residues.

The protein belongs to the protein kinase superfamily. CK1 Ser/Thr protein kinase family. VRK subfamily.

Its subcellular location is the nucleus. It localises to the cytoplasm. The protein localises to the cajal body. It catalyses the reaction L-seryl-[protein] + ATP = O-phospho-L-seryl-[protein] + ADP + H(+). The catalysed reaction is L-threonyl-[protein] + ATP = O-phospho-L-threonyl-[protein] + ADP + H(+). Its function is as follows. Serine/threonine kinase involved in the regulation of key cellular processes including the cell cycle, nuclear condensation, transcription regulation, and DNA damage response. Controls chromatin organization and remodeling by mediating phosphorylation of histone H3 on 'Thr-4' and histone H2AX (H2aXT4ph). It also phosphorylates KAT5 in response to DNA damage, promoting KAT5 association with chromatin and histone acetyltransferase activity. Is involved in the regulation of cell cycle progression of neural progenitors, and is required for proper cortical neuronal migration. Is involved in neurite elongation and branching in motor neurons, and has an essential role in Cajal bodies assembly, acting through COIL phosphorylation and the control of coilin degradation. Involved in Golgi disassembly during the cell cycle: following phosphorylation by PLK3 during mitosis, it is required to induce Golgi fragmentation. Phosphorylates BANF1: disrupts its ability to bind DNA, reduces its binding to LEM domain-containing proteins and causes its relocalization from the nucleus to the cytoplasm. Phosphorylates TP53BP1 and p53/TP53 on 'Thr-18', preventing the interaction between p53/TP53 and MDM2. Phosphorylates ATF2 which activates its transcriptional activity. Phosphorylates JUN. This chain is Serine/threonine-protein kinase VRK1 (vrk1), found in Danio rerio (Zebrafish).